A 199-amino-acid chain; its full sequence is Recombination protein RecR (199 aa).

The C4-type zinc finger occupies 57 to 72; sequence CSICGNITESDPCEIC. The 97-residue stretch at 80–176 folds into the Toprim domain; that stretch reads STIMVVEQPK…KVTRLAAGLA (97 aa).

Belongs to the RecR family.

Its function is as follows. May play a role in DNA repair. It seems to be involved in an RecBC-independent recombinational process of DNA repair. It may act with RecF and RecO. The protein is Recombination protein RecR of Lactobacillus johnsonii (strain CNCM I-12250 / La1 / NCC 533).